A 470-amino-acid chain; its full sequence is Glutamyl-tRNA reductase (470 aa).

Substrate is bound by residues 49–52, Ser109, 114–116, and Gln120; these read TCNR and ESQ. Cys50 serves as the catalytic Nucleophile. Residue 223–228 participates in NADP(+) binding; the sequence is GAGAVG.

The protein belongs to the glutamyl-tRNA reductase family. In terms of assembly, homodimer.

It carries out the reaction (S)-4-amino-5-oxopentanoate + tRNA(Glu) + NADP(+) = L-glutamyl-tRNA(Glu) + NADPH + H(+). It functions in the pathway porphyrin-containing compound metabolism; protoporphyrin-IX biosynthesis; 5-aminolevulinate from L-glutamyl-tRNA(Glu): step 1/2. Catalyzes the NADPH-dependent reduction of glutamyl-tRNA(Glu) to glutamate 1-semialdehyde (GSA). This Frankia alni (strain DSM 45986 / CECT 9034 / ACN14a) protein is Glutamyl-tRNA reductase.